Here is a 267-residue protein sequence, read N- to C-terminus: Small ribosomal subunit protein uS3 (267 aa).

Residues 38–106 (IRKLLATGME…QVQLNILEVK (69 aa)) form the KH type-2 domain. The tract at residues 215 to 267 (TAASAPAGDRDRPRRERPSRPRRSGSTGTTATSTEAGRAATAVVEAPAENQEG) is disordered. Positions 222 to 233 (GDRDRPRRERPS) are enriched in basic and acidic residues. The span at 238 to 256 (SGSTGTTATSTEAGRAATA) shows a compositional bias: low complexity.

This sequence belongs to the universal ribosomal protein uS3 family. Part of the 30S ribosomal subunit. Forms a tight complex with proteins S10 and S14.

Binds the lower part of the 30S subunit head. Binds mRNA in the 70S ribosome, positioning it for translation. The protein is Small ribosomal subunit protein uS3 of Nocardia farcinica (strain IFM 10152).